The following is a 1124-amino-acid chain: PAN2-PAN3 deadenylation complex catalytic subunit PAN2 (1124 aa).

WD repeat units follow at residues 19 to 58, 118 to 157, 158 to 195, and 309 to 348; these read IDNS…IPMP, PGFN…TTSF, NHTG…TVKS, and SSNT…SKNF. Positions 351 to 484 are linker; that stretch reads FPSYLEQPDF…EYKLSNKFEV (134 aa). One can recognise a USP domain in the interval 484–861; the sequence is VPNCYSNLKI…KPIIVMYQLA (378 aa). Residues 917 to 1091 form the Exonuclease domain; the sequence is IAIDAEFVAL…EDANTALLLY (175 aa). A divalent metal cation contacts are provided by Asp920, Glu922, Asp1030, and Asp1083.

Belongs to the peptidase C19 family. PAN2 subfamily. In terms of assembly, forms a heterotrimer with an asymmetric homodimer of the regulatory subunit PAN3 to form the poly(A)-nuclease (PAN) deadenylation complex. The cofactor is a divalent metal cation.

Its subcellular location is the cytoplasm. It catalyses the reaction Exonucleolytic cleavage of poly(A) to 5'-AMP.. Positively regulated by the regulatory subunit PAN3. Functionally, catalytic subunit of the poly(A)-nuclease (PAN) deadenylation complex, one of two cytoplasmic mRNA deadenylases involved in mRNA turnover. PAN specifically shortens poly(A) tails of RNA and the activity is stimulated by poly(A)-binding protein PAB1. PAN deadenylation is followed by rapid degradation of the shortened mRNA tails by the CCR4-NOT complex. Deadenylated mRNAs are then degraded by two alternative mechanisms, namely exosome-mediated 3'-5' exonucleolytic degradation, or deadenylation-dependent mRNA decaping and subsequent 5'-3' exonucleolytic degradation by XRN1. May also be involved in post-transcriptional maturation of mRNA poly(A) tails. This is PAN2-PAN3 deadenylation complex catalytic subunit PAN2 from Debaryomyces hansenii (strain ATCC 36239 / CBS 767 / BCRC 21394 / JCM 1990 / NBRC 0083 / IGC 2968) (Yeast).